The primary structure comprises 182 residues: Auxin-responsive protein IAA9 (182 aa).

The tract at residues 1–41 is disordered; the sequence is MELELGLAPPNSGHLVVDELSSSSSSGGGSGSAPVSASSAG. Positions 3–7 match the EAR-like (transcriptional repression) motif; sequence LELGL. The span at 32-41 shows a compositional bias: low complexity; that stretch reads SAPVSASSAG. In terms of domain architecture, PB1 spans 92–182; sequence ANYVKVKKEG…RSVKRLKILG (91 aa).

This sequence belongs to the Aux/IAA family. Homodimers and heterodimers. In terms of tissue distribution, expressed in etiolated shoots and flowers.

It is found in the nucleus. Its function is as follows. Aux/IAA proteins are short-lived transcriptional factors that function as repressors of early auxin response genes at low auxin concentrations. This is Auxin-responsive protein IAA9 (IAA9) from Oryza sativa subsp. japonica (Rice).